Here is a 425-residue protein sequence, read N- to C-terminus: Alpha-muurolene synthase (425 aa).

Residues Asp-97, Asp-101, Asn-240, Ser-244, and Glu-248 each contribute to the Mg(2+) site. The DDXXD motif signature appears at 97–101 (DNISD). The disordered stretch occupies residues 348 to 382 (VAPPPPPPPPTPPPQSSDADTKKQKVKAQDGKGPV). Over residues 349–362 (APPPPPPPPTPPPQ) the composition is skewed to pro residues. Basic and acidic residues predominate over residues 366–377 (ADTKKQKVKAQD).

The protein belongs to the terpene synthase family. Mg(2+) serves as cofactor.

The catalysed reaction is (2E,6E)-farnesyl diphosphate = alpha-muurolene + diphosphate. It carries out the reaction (2E,6E)-farnesyl diphosphate = gamma-muurolene + diphosphate. It catalyses the reaction (2E,6E)-farnesyl diphosphate = (+)-(R)-germacrene A + diphosphate. Functionally, sesquiterpene synthase that catalyzes the formation of alpha-muurolene, and at lower level (+)-(R)-germacrene A and gamma-muurolene. The sequence is that of Alpha-muurolene synthase (COP3) from Coprinopsis cinerea (strain Okayama-7 / 130 / ATCC MYA-4618 / FGSC 9003) (Inky cap fungus).